The following is a 36-amino-acid chain: Omega-agatoxin-Aa1b (36 aa).

Belongs to the neurotoxin 04 (omega-agtx) family. 01 (type I omega-agtx) subfamily. In terms of tissue distribution, expressed by the venom gland.

It localises to the secreted. Omega-agatoxin are antagonist of voltage-gated calcium channels. They block insect neuromuscular transmission presynaptically. This toxin is a blocker of L-type calcium channels (Cav/CACNA1). The protein is Omega-agatoxin-Aa1b of Agelenopsis aperta (North American funnel-web spider).